A 227-amino-acid chain; its full sequence is Germin-like protein subfamily T member 3 (227 aa).

The N-terminal stretch at 1–26 is a signal peptide; the sequence is MAHISQISSFLSIVLIFLALCITLFT. Cys44 and Cys59 form a disulfide bridge. The Cupin type-1 domain maps to 71-219; it reads SGLNTPLNTS…AFKADSKTIN (149 aa). Asn78 carries an N-linked (GlcNAc...) asparagine glycan. Mn(2+)-binding residues include His119, His121, and Glu126. A glycan (N-linked (GlcNAc...) asparagine) is linked at Asn143. Residue His165 participates in Mn(2+) binding.

It belongs to the germin family. As to quaternary structure, oligomer (believed to be a pentamer but probably hexamer).

The protein resides in the secreted. It is found in the extracellular space. It localises to the apoplast. Its function is as follows. May play a role in plant defense. Probably has no oxalate oxidase activity even if the active site is conserved. This is Germin-like protein subfamily T member 3 from Arabidopsis thaliana (Mouse-ear cress).